Here is a 266-residue protein sequence, read N- to C-terminus: Protein PAE0875 (266 aa).

The protein belongs to the CinA family.

The protein is Protein PAE0875 of Pyrobaculum aerophilum (strain ATCC 51768 / DSM 7523 / JCM 9630 / CIP 104966 / NBRC 100827 / IM2).